Reading from the N-terminus, the 689-residue chain is MQNIDFISEAEAKKLLEELSCKIAAYNHAYYIEDNPLVSDAEYDQLVNINLKLEQQFPHLVLENSPSKEVGAKIANKFVKVTHQVPMLSLSNAFDEQDVRDFVDRIKNFLRLDEFAPIFCEPKIDGLSFSAIYKNGLLITGATRGDGYVGEDITANIKTIKNFPHKIDNAPECLEVRGEIYIEKQDFLNLNEEQEEQGRDQFANPRNAAAGSLRQLDASITAKRPLKYFVYSGGVTEQNLASSQDQLLTKLKKFGFSVNEISKLTKSEEEIFAFYEYLKTNRENLPYEIDGVVYKLNDFELQNRMGFIARSPRFATAHKFPAIIGQTKLLSITVQVGRTGTLTPVAELEPIEIGGVTVSRATLHNFQEIVRKDVQIKDYVFLQRAGDVIPKITGADIEKRPNDTIAFEAPLFCPSCNSKLYYVPEDIIIRCDNGLNCPAQHYERIRHFVSKNAMDIAGLGRKQVEFLIAKGLISNPLDIFFLKKNNEASLIKLENMDGWGQKSVEKLLKNIEKSKNVSLPRFIYALGIRHIGEQNAKLLAREFGSYNNFIAQMELLSKNDSDIYQKLNNLEGIGDKILIDIIAFLDVKENIQLIKKLGEILNIEDYKETRAQSSLTGKIVVFTGSLPTISRAEVKATAEKLGAKVAASVSSNTDLVVAGLDAGSKLQKAKELNIKIIDEEEWLTLIKNA.

NAD(+)-binding positions include 40-44 (DAEYD), 89-90 (SL), and glutamate 121. Catalysis depends on lysine 123, which acts as the N6-AMP-lysine intermediate. Residues arginine 144, glutamate 179, lysine 295, and lysine 319 each contribute to the NAD(+) site. 4 residues coordinate Zn(2+): cysteine 413, cysteine 416, cysteine 431, and cysteine 437. The 80-residue stretch at 610 to 689 (RAQSSLTGKI…EEWLTLIKNA (80 aa)) folds into the BRCT domain.

The protein belongs to the NAD-dependent DNA ligase family. LigA subfamily. Mg(2+) is required as a cofactor. The cofactor is Mn(2+).

The catalysed reaction is NAD(+) + (deoxyribonucleotide)n-3'-hydroxyl + 5'-phospho-(deoxyribonucleotide)m = (deoxyribonucleotide)n+m + AMP + beta-nicotinamide D-nucleotide.. Functionally, DNA ligase that catalyzes the formation of phosphodiester linkages between 5'-phosphoryl and 3'-hydroxyl groups in double-stranded DNA using NAD as a coenzyme and as the energy source for the reaction. It is essential for DNA replication and repair of damaged DNA. The sequence is that of DNA ligase from Rickettsia akari (strain Hartford).